The primary structure comprises 266 residues: Dihydropteroate synthase (266 aa).

Residues A12–A260 form the Pterin-binding domain. N19 provides a ligand contact to Mg(2+). Residues T59, D93, N112, D176, K212, and R248 to H250 contribute to the (7,8-dihydropterin-6-yl)methyl diphosphate site.

The protein belongs to the DHPS family. Homodimer or homotrimer. Requires Mg(2+) as cofactor.

The enzyme catalyses (7,8-dihydropterin-6-yl)methyl diphosphate + 4-aminobenzoate = 7,8-dihydropteroate + diphosphate. The protein operates within cofactor biosynthesis; tetrahydrofolate biosynthesis; 7,8-dihydrofolate from 2-amino-4-hydroxy-6-hydroxymethyl-7,8-dihydropteridine diphosphate and 4-aminobenzoate: step 1/2. Catalyzes the condensation of para-aminobenzoate (pABA) with 6-hydroxymethyl-7,8-dihydropterin diphosphate (DHPt-PP) to form 7,8-dihydropteroate (H2Pte), the immediate precursor of folate derivatives. This is Dihydropteroate synthase (folP) from Streptococcus pyogenes.